Consider the following 189-residue polypeptide: Elongation factor P (189 aa).

Belongs to the elongation factor P family.

Its subcellular location is the cytoplasm. It participates in protein biosynthesis; polypeptide chain elongation. Its function is as follows. Involved in peptide bond synthesis. Stimulates efficient translation and peptide-bond synthesis on native or reconstituted 70S ribosomes in vitro. Probably functions indirectly by altering the affinity of the ribosome for aminoacyl-tRNA, thus increasing their reactivity as acceptors for peptidyl transferase. The protein is Elongation factor P of Rhizobium leguminosarum bv. trifolii (strain WSM2304).